Reading from the N-terminus, the 320-residue chain is Stress-involved WYL domain-containing regulator (320 aa).

Positions 7–65 (TTGRVVQLLGLLQSRRVWTGEELAERLGVTGRSVRRDIERLRELGYPVHASKGQGGGYQ) constitute an HTH deoR-type domain. The H-T-H motif DNA-binding region spans 24-43 (WTGEELAERLGVTGRSVRRD). In terms of domain architecture, WYL spans 139-218 (DTAVAPDVLM…SDVRATGTTF (80 aa)). A WCX domain region spans residues 245–320 (VRYFAPEKVV…MADRLRRAVR (76 aa)).

Homodimer.

Its function is as follows. Transcriptional activator. Acts as a transcriptional activator of the MSMEG_1357-56 operon upon genotoxic stress. Controls adjacent genes that belong to the DinB/YfiT-like putative metalloenzymes superfamily by upregulating their expression in response to various genotoxic stress conditions, including exposure to H(2)O(2) or the natural antibiotic zeocin, as well as mitomycin C (MMC), diamide and UVC radiation. Upon genotoxic stress, upregulates two genes encoding proteins of the DinB/YfiT-like putative metalloenzymes superfamily, MSMEG_1357 and MSMEG_1356. Binds different forms of single-stranded DNA (ssDNA) with high affinity, primarily through its characteristic WYL domain. Binds nucleic acids with single-stranded regions, such as polyT 20mer ssDNA, 5' tailed, 3' tailed and fork DNA, but not ssRNA. The polypeptide is Stress-involved WYL domain-containing regulator (Mycolicibacterium smegmatis (strain ATCC 700084 / mc(2)155) (Mycobacterium smegmatis)).